Reading from the N-terminus, the 282-residue chain is Kallikrein-11 (282 aa).

A signal peptide spans 1–50 (MQRLRWLRDWKSSGRGLTAAKEPGARSSPLQAMRILQLILLALATGLVGG). Residues 51–53 (ETR) constitute a propeptide, activation peptide. A Peptidase S1 domain is found at 53–280 (RIIKGFECKP…YVDWIQETMK (228 aa)). 6 disulfide bridges follow: Cys-60–Cys-195, Cys-79–Cys-95, Cys-167–Cys-269, Cys-174–Cys-241, Cys-206–Cys-220, and Cys-231–Cys-256. The Charge relay system role is filled by His-94. Asn-131 carries an N-linked (GlcNAc...) asparagine glycan. Residue Asp-142 is the Charge relay system of the active site. 2 N-linked (GlcNAc...) asparagine glycosylation sites follow: Asn-197 and Asn-213. Ser-235 acts as the Charge relay system in catalysis. N-linked (GlcNAc...) asparagine glycosylation is present at Asn-242.

The protein belongs to the peptidase S1 family. Kallikrein subfamily. In terms of processing, about 40% of KLK11 is inactivated by internal cleavage after Arg-188. This proteolytic inactivation may be effected by plasminogen. As to expression, expressed in brain, skin and prostate. Isoform 1 is expressed preferentially in brain. Isoform 2 is expressed in prostate. Present in seminal plasma at concentrations ranging from 2 to 37 microg/mL (at protein level).

Its subcellular location is the secreted. The protein resides in the golgi apparatus. Functionally, possible multifunctional protease. Efficiently cleaves 'bz-Phe-Arg-4-methylcoumaryl-7-amide', a kallikrein substrate, and weakly cleaves other substrates for kallikrein and trypsin. Cleaves synthetic peptides after arginine but not lysine residues. The polypeptide is Kallikrein-11 (KLK11) (Homo sapiens (Human)).